Consider the following 243-residue polypeptide: Phosphoribosyl isomerase A (243 aa).

The Proton acceptor role is filled by Asp-9. Asp-128 serves as the catalytic Proton donor.

Belongs to the HisA/HisF family.

It is found in the cytoplasm. The catalysed reaction is 1-(5-phospho-beta-D-ribosyl)-5-[(5-phospho-beta-D-ribosylamino)methylideneamino]imidazole-4-carboxamide = 5-[(5-phospho-1-deoxy-D-ribulos-1-ylimino)methylamino]-1-(5-phospho-beta-D-ribosyl)imidazole-4-carboxamide. It carries out the reaction N-(5-phospho-beta-D-ribosyl)anthranilate = 1-(2-carboxyphenylamino)-1-deoxy-D-ribulose 5-phosphate. It participates in amino-acid biosynthesis; L-histidine biosynthesis; L-histidine from 5-phospho-alpha-D-ribose 1-diphosphate: step 4/9. The protein operates within amino-acid biosynthesis; L-tryptophan biosynthesis; L-tryptophan from chorismate: step 3/5. In terms of biological role, involved in both the histidine and tryptophan biosynthetic pathways. The polypeptide is Phosphoribosyl isomerase A (Mycolicibacterium paratuberculosis (strain ATCC BAA-968 / K-10) (Mycobacterium paratuberculosis)).